The chain runs to 858 residues: DNA mismatch repair protein MutS (858 aa).

An ATP-binding site is contributed by 613–620 (GPNMAGKS).

This sequence belongs to the DNA mismatch repair MutS family.

Its function is as follows. This protein is involved in the repair of mismatches in DNA. It is possible that it carries out the mismatch recognition step. This protein has a weak ATPase activity. This chain is DNA mismatch repair protein MutS, found in Dehalococcoides mccartyi (strain CBDB1).